Consider the following 115-residue polypeptide: U3-lycotoxin-Ls1u (115 aa).

The N-terminal stretch at 1–20 is a signal peptide; sequence MKFVLLFGVLLVTLFSYSSA. The propeptide occupies 21–44; that stretch reads EMLDDFDQADEDELLSLIEKEEAR. Cystine bridges form between C48–C63, C55–C72, and C62–C87.

This sequence belongs to the neurotoxin 19 (CSTX) family. 01 subfamily. Expressed by the venom gland.

The protein localises to the secreted. This chain is U3-lycotoxin-Ls1u, found in Lycosa singoriensis (Wolf spider).